Reading from the N-terminus, the 343-residue chain is Protein RecA (343 aa).

G65–T72 contributes to the ATP binding site.

This sequence belongs to the RecA family.

Its subcellular location is the cytoplasm. Can catalyze the hydrolysis of ATP in the presence of single-stranded DNA, the ATP-dependent uptake of single-stranded DNA by duplex DNA, and the ATP-dependent hybridization of homologous single-stranded DNAs. It interacts with LexA causing its activation and leading to its autocatalytic cleavage. This Pseudoalteromonas atlantica (strain T6c / ATCC BAA-1087) protein is Protein RecA.